The primary structure comprises 305 residues: tRNA uridine(34) hydroxylase (305 aa).

The Rhodanese domain maps to 125 to 219 (ADENTVVVDK…YLEEVPREQS (95 aa)). C179 (cysteine persulfide intermediate) is an active-site residue.

This sequence belongs to the TrhO family.

The catalysed reaction is uridine(34) in tRNA + AH2 + O2 = 5-hydroxyuridine(34) in tRNA + A + H2O. Catalyzes oxygen-dependent 5-hydroxyuridine (ho5U) modification at position 34 in tRNAs. This is tRNA uridine(34) hydroxylase from Brucella abortus (strain S19).